The sequence spans 370 residues: D-aspartate oxidase (370 aa).

An N-terminal signal peptide occupies residues 1–18 (MPPRIIILGAGIIGLSTA). Residues Ile13, Glu42, Ala63, Ser64, and Gly68 each contribute to the FAD site. N-linked (GlcNAc...) asparagine glycosylation occurs at Asn207. Residues Arg308, Gly338, and Tyr339 each contribute to the FAD site.

This sequence belongs to the DAMOX/DASOX family. As to quaternary structure, monomer. It depends on FAD as a cofactor.

The catalysed reaction is D-aspartate + O2 + H2O = oxaloacetate + H2O2 + NH4(+). The enzyme catalyses D-glutamate + O2 + H2O = H2O2 + 2-oxoglutarate + NH4(+). Functionally, selectively catalyzes the oxidative deamination of acidic amino acids. Protects the organism from the toxicity of D-amino acids. Enables the organism to utilize D-amino acids as a source of nutrients. The sequence is that of D-aspartate oxidase from Talaromyces thermophilus.